The primary structure comprises 269 residues: Serine/threonine-protein kinase ZRK7 (269 aa).

Residues 80 to 269 (FDWSYAIGVD…KNRLMVTVIT (190 aa)) form the Protein kinase domain. Residues 86–94 (IGVDRFVWY) and Lys106 contribute to the ATP site. The active-site Proton acceptor is the Asp205.

It belongs to the protein kinase superfamily. Ser/Thr protein kinase family. ZRK subfamily.

It catalyses the reaction L-seryl-[protein] + ATP = O-phospho-L-seryl-[protein] + ADP + H(+). The enzyme catalyses L-threonyl-[protein] + ATP = O-phospho-L-threonyl-[protein] + ADP + H(+). In Arabidopsis thaliana (Mouse-ear cress), this protein is Serine/threonine-protein kinase ZRK7.